A 422-amino-acid chain; its full sequence is O-methyltransferase kk1A (422 aa).

Asp-277 lines the S-adenosyl-L-methionine pocket. His-320 functions as the Proton acceptor in the catalytic mechanism.

Belongs to the class I-like SAM-binding methyltransferase superfamily. Cation-independent O-methyltransferase family.

The protein operates within secondary metabolite biosynthesis. Functionally, O-methyltransferase; part of the gene cluster that mediates the biosynthesis of KK-1, a novel cyclic depsipeptide with 10 residues which is a promising active compound with high activity against many plant pathogens, especially Botrytis cinerea. Within the pathway, kk1A is responsible for the O-methylation of tyrosine as a free amino acid before its activation as an aminoacyl-AMP by the corresponding A domain of kk1B. The nonribosomal peptide synthetase (NRPS) kk1B catalyzes the elongation and cyclization of the decapeptide chain composed of 1 D-lactic acid residue (D-Lac), 1 pipecolic acid residue (Pip), 1 aspartic acid residue (Asp), 1 isoleucine residue (Ile), 1 glycine residue (Gly), 1 tyrosine residue (Tyr) and 4 valine residues (Val). The Asp, Ile and 3 Val residues are N-methylated by the 5 methyltransferase domains from the NRPS (found in modules 3, 5, 6, 7 and 9), whereas the Tyr residue is O-methylated by the cluster encoded O-methyltransferase kk1A. The thioesterase kk1J is likely to be involved in the corrective mechanism of peptide chain synthesis. The D-lactate dehydrogenase kk1H is involved in the synthesis of D-lactic acid from pyruvic acid, which is recognized by the A domain of the first kk1B module. The pyrroline-5-carboxylate reductase kk1I is involved in the synthesis of the L-pipecolic acid residue of KK-1 from delta-1-pyrroline-5-carboxylate (P5C), a metabolic intermediate of lysine. It is still unclear how kk1C and kk1D are involved in the production of KK-1. The polypeptide is O-methyltransferase kk1A (Curvularia clavata).